We begin with the raw amino-acid sequence, 249 residues long: Small ribosomal subunit protein uS2 (249 aa).

It belongs to the universal ribosomal protein uS2 family.

This chain is Small ribosomal subunit protein uS2, found in Bordetella parapertussis (strain 12822 / ATCC BAA-587 / NCTC 13253).